Here is a 170-residue protein sequence, read N- to C-terminus: Copper transporter 1 (170 aa).

The interval 1-29 (MDHDHMHGMPRPSSSSSSSPSSMMNNGSM) is disordered. Residues 9–29 (MPRPSSSSSSSPSSMMNNGSM) are compositionally biased toward low complexity. Helical transmembrane passes span 65–85 (GMYA…EWLA) and 114–134 (IGLA…VFLV).

This sequence belongs to the copper transporter (Ctr) (TC 1.A.56) family. SLC31A subfamily. As to expression, expressed in the root apex, lateral root primordia, embryo, trichomes, guard cells and pollen grains.

The protein localises to the membrane. Copper transporter involved in copper acquisition and transport in leaves. Required for copper homeostasis and normal plant growth and development. This Arabidopsis thaliana (Mouse-ear cress) protein is Copper transporter 1 (COPT1).